Reading from the N-terminus, the 309-residue chain is Mitochondrial substrate carrier family protein ancA (309 aa).

Solcar repeat units lie at residues 10-102, 114-203, and 216-299; these read SSFV…YKKF, KFFI…AKGI, and ASWG…IQKL. 5 helical membrane-spanning segments follow: residues 12-41, 79-103, 113-133, 181-201, and 215-235; these read FVKD…LLLQ, LANV…KKFF, TKFF…SLLF, VSVG…DTAK, and WASW…SYPF. Positions 84 and 96 each coordinate ADP. Position 239 (Arg239) interacts with ADP. An important for transport activity region spans residues 239 to 244; the sequence is RRRMMM. Residues 239–244 carry the Nucleotide carrier signature motif motif; that stretch reads RRRMMM. A helical membrane pass occupies residues 276–293; that stretch reads ALSNAIRGSGGALVLVIY.

It belongs to the mitochondrial carrier (TC 2.A.29) family. As to quaternary structure, monomer.

The protein resides in the mitochondrion inner membrane. It catalyses the reaction ADP(in) + ATP(out) = ADP(out) + ATP(in). The matrix-open state (m-state) is inhibited by the membrane-permeable bongkrekic acid (BKA). The cytoplasmic-open state (c-state) is inhibited by the membrane-impermeable toxic inhibitor carboxyatractyloside (CATR). Functionally, ADP:ATP antiporter that mediates import of ADP into the mitochondrial matrix for ATP synthesis, and export of ATP out to fuel the cell. Cycles between the cytoplasmic-open state (c-state) and the matrix-open state (m-state): operates by the alternating access mechanism with a single substrate-binding site intermittently exposed to either the cytosolic (c-state) or matrix (m-state) side of the inner mitochondrial membrane. This Dictyostelium discoideum (Social amoeba) protein is Mitochondrial substrate carrier family protein ancA (ancA).